Consider the following 315-residue polypeptide: Replication factor C small subunit (315 aa).

43–50 (GSPGVGKT) provides a ligand contact to ATP.

The protein belongs to the activator 1 small subunits family. RfcS subfamily. Heteromultimer composed of small subunits (RfcS) and large subunits (RfcL).

In terms of biological role, part of the RFC clamp loader complex which loads the PCNA sliding clamp onto DNA. In Methanococcus maripaludis (strain C7 / ATCC BAA-1331), this protein is Replication factor C small subunit.